A 160-amino-acid chain; its full sequence is 2-C-methyl-D-erythritol 2,4-cyclodiphosphate synthase (160 aa).

Residues aspartate 8 and histidine 10 each contribute to the a divalent metal cation site. 4-CDP-2-C-methyl-D-erythritol 2-phosphate-binding positions include 8 to 10 (DVH) and 34 to 35 (HS). Histidine 42 is a binding site for a divalent metal cation. 4-CDP-2-C-methyl-D-erythritol 2-phosphate contacts are provided by residues 56 to 58 (DIG), 61 to 65 (FPDTD), 100 to 106 (AQAPKML), 132 to 135 (TTTE), phenylalanine 139, and arginine 142.

Belongs to the IspF family. As to quaternary structure, homotrimer. Requires a divalent metal cation as cofactor.

It catalyses the reaction 4-CDP-2-C-methyl-D-erythritol 2-phosphate = 2-C-methyl-D-erythritol 2,4-cyclic diphosphate + CMP. It participates in isoprenoid biosynthesis; isopentenyl diphosphate biosynthesis via DXP pathway; isopentenyl diphosphate from 1-deoxy-D-xylulose 5-phosphate: step 4/6. Functionally, involved in the biosynthesis of isopentenyl diphosphate (IPP) and dimethylallyl diphosphate (DMAPP), two major building blocks of isoprenoid compounds. Catalyzes the conversion of 4-diphosphocytidyl-2-C-methyl-D-erythritol 2-phosphate (CDP-ME2P) to 2-C-methyl-D-erythritol 2,4-cyclodiphosphate (ME-CPP) with a corresponding release of cytidine 5-monophosphate (CMP). In Proteus mirabilis (strain HI4320), this protein is 2-C-methyl-D-erythritol 2,4-cyclodiphosphate synthase.